The sequence spans 793 residues: Xaa-Pro dipeptidyl-peptidase (793 aa).

Catalysis depends on charge relay system residues Ser363, Asp483, and His514.

This sequence belongs to the peptidase S15 family. In terms of assembly, homodimer.

Its subcellular location is the cytoplasm. It carries out the reaction Hydrolyzes Xaa-Pro-|- bonds to release unblocked, N-terminal dipeptides from substrates including Ala-Pro-|-p-nitroanilide and (sequentially) Tyr-Pro-|-Phe-Pro-|-Gly-Pro-|-Ile.. Functionally, removes N-terminal dipeptides sequentially from polypeptides having unsubstituted N-termini provided that the penultimate residue is proline. The sequence is that of Xaa-Pro dipeptidyl-peptidase from Lactobacillus helveticus (strain DPC 4571).